The chain runs to 308 residues: Maspardin (308 aa).

The AB hydrolase-1 domain occupies 87-159 (FCDGFRKLLD…NSFWLMPAFM (73 aa)). The residue at position 304 (S304) is a Phosphoserine.

It belongs to the AB hydrolase superfamily. Interacts with CD4. Interacts with ALDH16A1. In terms of tissue distribution, expressed in all tissues tested, including heart, brain, placenta, lung, liver, skeletal muscle, kidney and pancreas. Expressed in J.CaM1.6, HuT 78 and HeLa cell lines (at protein level).

It is found in the cytoplasm. Its subcellular location is the cytosol. The protein resides in the membrane. It localises to the endosome membrane. The protein localises to the golgi apparatus. It is found in the trans-Golgi network membrane. May play a role as a negative regulatory factor in CD4-dependent T-cell activation. The polypeptide is Maspardin (SPG21) (Homo sapiens (Human)).